The chain runs to 131 residues: ATP synthase epsilon chain, chloroplastic (131 aa).

This sequence belongs to the ATPase epsilon chain family. F-type ATPases have 2 components, CF(1) - the catalytic core - and CF(0) - the membrane proton channel. CF(1) has five subunits: alpha(3), beta(3), gamma(1), delta(1), epsilon(1). CF(0) has three main subunits: a, b and c.

It is found in the plastid. The protein resides in the chloroplast thylakoid membrane. Functionally, produces ATP from ADP in the presence of a proton gradient across the membrane. The chain is ATP synthase epsilon chain, chloroplastic from Cyanidioschyzon merolae (strain NIES-3377 / 10D) (Unicellular red alga).